Consider the following 31-residue polypeptide: uncharacterized protein (31 aa).

This is an uncharacterized protein from Chlamydia phage 1 (Bacteriophage Chp1).